The sequence spans 404 residues: Growth/differentiation factor 6-A (404 aa).

A signal peptide spans 1–24 (MDALRAVAFYALFVFLWSLPCCQS). Residues 25-284 (AALISQKRSK…LQFKARRRRR (260 aa)) constitute a propeptide that is removed on maturation. A glycan (N-linked (GlcNAc...) asparagine) is linked at Asn-91. The disordered stretch occupies residues 263-304 (KSRGDDDEEESALQFKARRRRRTALNNRHGKRHGKKSKSRCS). A compositionally biased stretch (basic residues) spans 278-304 (KARRRRRTALNNRHGKRHGKKSKSRCS). 3 disulfide bridges follow: Cys-303/Cys-369, Cys-332/Cys-401, and Cys-336/Cys-403.

Belongs to the TGF-beta family. Homodimer; disulfide-linked. First expressed in late gastrula stage embryos (9.5 hours post fertilization (hpf)) in anterior neuroectoderm corresponding to the future dorsal part of the brain. Shortly after tailbud formation (11 hpf), expression expands to the entire neural region and is subsequently expressed in derivatives of the lateral neural plate and migrating neural crest cells, with the future midbrain and hindbrain showing strong expression. Also expressed weakly and transiently in the posterior embryo from 11.5 hpf to 15 hpf in the lateral mesoderm, and in ectoderm above the neural keel. At 14 hpf, expressed along the entire length of the embryo and starting around the 16-somite stage, expressed in the dorsal quadrant of the retina, representing the distal tip of the eye anlage. At this stage, also expressed in the hatching gland and the hypochord. At 24 hpf, expressed in the roof plate outlining the fourth brain ventricle, in the posterior hypochord, the primitive gut endoderm, the ventral tail mesenchyme, the dorsal part of the neural tube and the dorsal fin. Weakly expressed in the dorsal part of the posterior spinal cord and in blood cell precursors.

The protein resides in the secreted. Growth factor that controls proliferation and cellular differentiation in the retina. Plays a key role in regulating apoptosis during retinal development. Establishes dorsal-ventral positional information in the retina and controls the formation of the retinotectal map. Functions maternally in dorsal/ventral patterning to induce the expression of the zygotic bmp2b and bmp4 genes and ventralize embryos. Zygotic expression does not appear to regulate axis specification, but instead functions to establish the integrity of the axial vessels during embryonic development. May be involved in maintaining the identity of cells of the dorsal-most neural tube and of at least a subset of neural crest cells. This Danio rerio (Zebrafish) protein is Growth/differentiation factor 6-A (gdf6a).